A 187-amino-acid polypeptide reads, in one-letter code: UPF0301 protein Clim_0777 (187 aa).

The protein belongs to the UPF0301 (AlgH) family.

This Chlorobium limicola (strain DSM 245 / NBRC 103803 / 6330) protein is UPF0301 protein Clim_0777.